Consider the following 406-residue polypeptide: Cysteine desulfurase (406 aa).

Lys226 is modified (N6-(pyridoxal phosphate)lysine). The Cysteine persulfide intermediate role is filled by Cys364.

It belongs to the class-V pyridoxal-phosphate-dependent aminotransferase family. Csd subfamily. As to quaternary structure, homodimer. Interacts with SufE and the SufBCD complex composed of SufB, SufC and SufD. The interaction with SufE is required to mediate the direct transfer of the sulfur atom from the S-sulfanylcysteine. Pyridoxal 5'-phosphate is required as a cofactor.

The protein resides in the cytoplasm. The enzyme catalyses (sulfur carrier)-H + L-cysteine = (sulfur carrier)-SH + L-alanine. It carries out the reaction L-selenocysteine + AH2 = hydrogenselenide + L-alanine + A + H(+). It participates in cofactor biosynthesis; iron-sulfur cluster biosynthesis. Cysteine desulfurases mobilize the sulfur from L-cysteine to yield L-alanine, an essential step in sulfur metabolism for biosynthesis of a variety of sulfur-containing biomolecules. Component of the suf operon, which is activated and required under specific conditions such as oxidative stress and iron limitation. Acts as a potent selenocysteine lyase in vitro, that mobilizes selenium from L-selenocysteine. Selenocysteine lyase activity is however unsure in vivo. The chain is Cysteine desulfurase from Enterobacter sp. (strain 638).